Consider the following 341-residue polypeptide: MNIQQALARVVAGNDLSQDEMVEVMTAVMSGQATPAQIGGFLVALRMKSESLDEITGAAMVMRELATKVEVSANNLVDTCGTGGDGANLFNVSTAAAFVVAAAGGHVAKHGNRSVSSSTGSADVLEAAGVNLSAAPDVVARAIENVGVGFMFAPAHHSAMKHAIGPRKELALRTIFNMLGPMTNPAGVKRQVIGVFTPALCRPMAEVLGRLGSEHVMIVCSDDGLDELSIAAPSHVAELKNGVVTEFKVDPADYGFGYSDLDGLSVTSAEESLGLIRGAFKGDTTELSQKAAAIIAINAGAAIYVAGLAGSMKDGVAMAEDALSSGLAAEKLKELIEFTNV.

5-phospho-alpha-D-ribose 1-diphosphate contacts are provided by residues Gly81, Gly84–Asp85, Asn91–Thr94, Lys109–Ser117, and Ser121. Residue Gly81 participates in anthranilate binding. Mg(2+) is bound at residue Ser93. Asn112 contacts anthranilate. Position 167 (Arg167) interacts with anthranilate. Asp226 and Glu227 together coordinate Mg(2+).

The protein belongs to the anthranilate phosphoribosyltransferase family. As to quaternary structure, homodimer. Requires Mg(2+) as cofactor.

It carries out the reaction N-(5-phospho-beta-D-ribosyl)anthranilate + diphosphate = 5-phospho-alpha-D-ribose 1-diphosphate + anthranilate. The protein operates within amino-acid biosynthesis; L-tryptophan biosynthesis; L-tryptophan from chorismate: step 2/5. Its function is as follows. Catalyzes the transfer of the phosphoribosyl group of 5-phosphorylribose-1-pyrophosphate (PRPP) to anthranilate to yield N-(5'-phosphoribosyl)-anthranilate (PRA). This chain is Anthranilate phosphoribosyltransferase, found in Teredinibacter turnerae (strain ATCC 39867 / T7901).